The primary structure comprises 107 residues: Sulmotoxin 1 (107 aa).

An N-terminal signal peptide occupies residues 1–19 (MKTLLLALAVVVLVCLGSA). The propeptide occupies 20 to 34 (NELGLGRQRVDRRRR). 5 disulfides stabilise this stretch: C44/C68, C47/C55, C61/C83, C87/C98, and C99/C104.

This sequence belongs to the three-finger toxin family. Ancestral subfamily. Boigatoxin sub-subfamily. As to quaternary structure, monomer. Expressed by the venom gland.

The protein resides in the secreted. Mammal-specific neurotoxin (tested on mice). Not toxic to lizards (tested on geckos). In Spilotes sulphureus (Amazon puffing snake), this protein is Sulmotoxin 1.